Reading from the N-terminus, the 120-residue chain is NAD(P)H-quinone oxidoreductase subunit 3, chloroplastic (120 aa).

Transmembrane regions (helical) follow at residues 2 to 22 (FLLYEYDIFWAFLIISSVIPI), 64 to 84 (MFALVFVVFDVETIFLYPWAL), and 88 to 108 (ILGVSVFIEALIFVLILVLGL).

Belongs to the complex I subunit 3 family. NDH is composed of at least 16 different subunits, 5 of which are encoded in the nucleus.

The protein resides in the plastid. It is found in the chloroplast thylakoid membrane. It carries out the reaction a plastoquinone + NADH + (n+1) H(+)(in) = a plastoquinol + NAD(+) + n H(+)(out). It catalyses the reaction a plastoquinone + NADPH + (n+1) H(+)(in) = a plastoquinol + NADP(+) + n H(+)(out). Functionally, NDH shuttles electrons from NAD(P)H:plastoquinone, via FMN and iron-sulfur (Fe-S) centers, to quinones in the photosynthetic chain and possibly in a chloroplast respiratory chain. The immediate electron acceptor for the enzyme in this species is believed to be plastoquinone. Couples the redox reaction to proton translocation, and thus conserves the redox energy in a proton gradient. This is NAD(P)H-quinone oxidoreductase subunit 3, chloroplastic from Oenothera argillicola (Appalachian evening primrose).